The sequence spans 354 residues: Elongation factor Ts (354 aa).

The interval 81-84 (TDFV) is involved in Mg(2+) ion dislocation from EF-Tu.

The protein belongs to the EF-Ts family.

It localises to the cytoplasm. Functionally, associates with the EF-Tu.GDP complex and induces the exchange of GDP to GTP. It remains bound to the aminoacyl-tRNA.EF-Tu.GTP complex up to the GTP hydrolysis stage on the ribosome. The sequence is that of Elongation factor Ts from Campylobacter concisus (strain 13826).